The following is a 344-amino-acid chain: Heat-inducible transcription repressor HrcA (344 aa).

This sequence belongs to the HrcA family.

Its function is as follows. Negative regulator of class I heat shock genes (grpE-dnaK-dnaJ and groELS operons). Prevents heat-shock induction of these operons. This is Heat-inducible transcription repressor HrcA from Streptococcus pneumoniae (strain P1031).